We begin with the raw amino-acid sequence, 123 residues long: MAEELKRFLYKKLPSIEGLHAIVVSDRDGVPVIKVANENAPELALRPSFLSTFALATDQGSKLGLSKNKSIICYYDTCQVVQFNRLPLVVSFIASSDANTGLLLSLNEELGDLFEELQHAVEI.

Belongs to the LAMTOR3 family. In terms of assembly, part of the Ragulator complex composed of lamtor1, lamtor2, lamtor3, lamtor4 and lamtor5. The Ragulator complex interacts with slc38a9; the probable amino acid sensor. Component of the lysosomal folliculin complex (LFC).

It is found in the late endosome membrane. Functionally, as part of the Ragulator complex it is involved in amino acid sensing and activation of mTORC1, a signaling complex promoting cell growth in response to growth factors, energy levels, and amino acids. Activated by amino acids through a mechanism involving the lysosomal V-ATPase, the Ragulator plays a dual role for the small GTPases Rag (RagA/RRAGA, RagB/RRAGB, RagC/RRAGC and/or RagD/RRAGD): it (1) acts as a guanine nucleotide exchange factor (GEF), activating the small GTPases Rag and (2) mediates recruitment of Rag GTPases to the lysosome membrane. Activated Ragulator and Rag GTPases function as a scaffold recruiting mTORC1 to lysosomes where it is in turn activated. The polypeptide is Ragulator complex protein LAMTOR3-B (lamtor3-b) (Xenopus laevis (African clawed frog)).